A 557-amino-acid chain; its full sequence is Leucine-rich glioma-inactivated protein 1 (557 aa).

The signal sequence occupies residues 1–34; it reads MESERSKRMGNACIPLKRIAYFLCLLSALLLTEG. Residues 35-72 enclose the LRRNT domain; it reads KKPAKPKCPAVCTCTKDNALCENARSIPRTVPPDVISL. 3 LRR repeats span residues 92–113, 116–137, and 140–161; these read SLQLLLFTSNSFDVISDDAFIG, HLEYLFIENNNIKSISRHTFRG, and SLIHLSLANNNLQTLPKDIFKG. Positions 173-223 constitute an LRRCT domain; the sequence is NSFNCDCKLKWLVEWLGHTNATVEDIYCEGPPEYKKRKINSLSSKDFDCII. An N-linked (GlcNAc...) asparagine glycan is attached at asparagine 192. EAR repeat units follow at residues 225–267, 271–313, 317–364, 366–415, 419–462, 464–506, and 510–552; these read EFAK…EWDH, TFRN…KRDS, KFIK…KWNG, GFYS…QWNK, SFTN…KWGG, SFQD…NWDA, and KFVK…KHVI. Asparagine 277 carries N-linked (GlcNAc...) asparagine glycosylation. N-linked (GlcNAc...) asparagine glycosylation is present at asparagine 422.

Oligomer. Interacts with KCNA1 within a complex containing KCNA1, KCNA4 and KCNAB1. Part of a complex containing ADAM22, DLG4/PSD95 and CACNG2 (stargazin). Can bind to ADAM11 and ADAM23. In terms of processing, glycosylated.

It is found in the secreted. The protein localises to the synapse. It localises to the cytoplasm. Its function is as follows. Regulates voltage-gated potassium channels assembled from KCNA1, KCNA4 and KCNAB1. It slows down channel inactivation by precluding channel closure mediated by the KCNAB1 subunit. Ligand for ADAM22 that positively regulates synaptic transmission mediated by AMPA-type glutamate receptors. Plays a role in suppressing the production of MMP1/3 through the phosphatidylinositol 3-kinase/ERK pathway. The sequence is that of Leucine-rich glioma-inactivated protein 1 (LGI1) from Pan troglodytes (Chimpanzee).